The sequence spans 350 residues: MTFMAIEIPEFIVPFVPWIRGTVGLVLVGAIFLGGMAAVWIERKLSADIQLRYGPSRVGKFGLLQLVADAIKLFTKEDVRPGNADRFLYDNAPVFMLTSLFLMLVAIPVGAVFIDGNLYPLAVTEMDISILFIEAVSAINIFGIFMAAYGSNNKYSLLGAFRNFARMIGYEVPLGIAIVSVAVMTGSLNIIDITSAQGSFVWNIFLQPIGFVVFFIALMADLGRLPFDQNESEEELVAGWVTEYTGMRFGLVFFAEYMHMILGSFLVALLFLGGWNVPAFVANNAVLGLIAPTGILLLKTVLVLMTIIGMRWAVPRFRIDQVVDMSWKKLLPLSLLNLAWAVGLGLYLGA.

8 helical membrane passes run 21–41 (GTVG…AVWI), 94–114 (VFML…AVFI), 128–148 (ISIL…FMAA), 173–193 (PLGI…IIDI), 200–220 (FVWN…ALMA), 261–281 (ILGS…PAFV), 288–308 (GLIA…MTII), and 330–350 (LLPL…YLGA).

This sequence belongs to the complex I subunit 1 family. In terms of assembly, the FPO complex is composed of at least 13 different subunits. FpoA, FpoH, FpoJ, FpoK, FpoL, FpoM and FpoN proteins constitute the membrane sector of the complex.

It is found in the cell membrane. It carries out the reaction methanophenazine + reduced coenzyme F420-(gamma-L-Glu)(n) = dihydromethanophenazine + oxidized coenzyme F420-(gamma-L-Glu)(n) + H(+). In terms of biological role, component of the F(420)H(2) dehydrogenase (FPO complex) which is part of the energy-conserving F(420)H(2):heterodisulfide oxidoreductase system. The membrane-bound electron transfer system of the complex plays an important role in the metabolism of methylotrophic methanogens when the organisms grow on methanol or methylamines. Catalyzes the oxidation of methanophenazine to dihydromethanophenazine. It shuttles electrons from F(420)H(2), via FAD and iron-sulfur (Fe-S) centers, to methanophenazine (an electron carrier in the membrane). It couples the redox reaction to proton translocation (for every two electrons transferred, two hydrogen ions are translocated across the cytoplasmic membrane), and thus conserves the redox energy in a proton gradient. It also catalyzes the oxidation of F(420)H(2) with quinones such as 2,3-dimethyl-1,4-naphthoquinone, 2-methyl-1,4-naphthoquinone and tetramethyl-p-benzoquinone. This chain is F(420)H(2) dehydrogenase subunit H, found in Methanosarcina mazei (strain ATCC BAA-159 / DSM 3647 / Goe1 / Go1 / JCM 11833 / OCM 88) (Methanosarcina frisia).